Here is a 414-residue protein sequence, read N- to C-terminus: Cell division protein FtsA (414 aa).

Belongs to the FtsA/MreB family. Self-interacts. Interacts with FtsZ.

Its subcellular location is the cell inner membrane. Functionally, cell division protein that is involved in the assembly of the Z ring. May serve as a membrane anchor for the Z ring. In Neisseria meningitidis serogroup B (strain ATCC BAA-335 / MC58), this protein is Cell division protein FtsA.